A 149-amino-acid chain; its full sequence is Calmodulin (149 aa).

Position 2 is an N-acetylalanine (Ala2). EF-hand domains follow at residues Glu8–Asn43, Pro44–Asp79, Asp81–Lys116, and Leu117–Lys149. Ca(2+) contacts are provided by Asp21, Asp23, Asp25, Thr27, Glu32, Asp57, Asp59, Asp61, Thr63, Glu68, Asp94, Asp96, Asp98, and Glu105. Position 116 is an N6,N6,N6-trimethyllysine (Lys116). The Ca(2+) site is built by Asp130, Asp132, Asp134, Gln136, and Glu141.

Belongs to the calmodulin family.

In terms of biological role, calmodulin mediates the control of a large number of enzymes, ion channels and other proteins by Ca(2+). Among the enzymes to be stimulated by the calmodulin-Ca(2+) complex are a number of protein kinases and phosphatases. In Renilla reniformis (Sea pansy), this protein is Calmodulin.